We begin with the raw amino-acid sequence, 507 residues long: Dolichyl pyrophosphate Man9GlcNAc2 alpha-1,3-glucosyltransferase (507 aa).

Over 1-3 the chain is Cytoplasmic; it reads MEK. A helical transmembrane segment spans residues 4-24; sequence WSLMTITVLLALTVRWTVSLG. Over 25 to 114 the chain is Lumenal; the sequence is SYSGAGKPPM…SQSHKLFMRT (90 aa). An N-linked (GlcNAc...) asparagine glycan is attached at Asn-59. A helical membrane pass occupies residues 115–135; that stretch reads TVFVADLLIYIPAVILYCCSL. The Cytoplasmic segment spans residues 136–143; sequence KETSTKKK. A helical membrane pass occupies residues 144-164; it reads VSSALCILLYPGLILIDHGHF. Topologically, residues 165 to 168 are lumenal; sequence QYNS. Residues 169–189 traverse the membrane as a helical segment; it reads VSLGFALWGVLCLSYDWDLLG. Residues 190–226 lie on the Cytoplasmic side of the membrane; sequence SAAFCLALNYKQMELYHSLPFFCYLLGKCFKKGLKGK. The chain crosses the membrane as a helical span at residues 227–247; the sequence is GLLLLIKLAGTVVASFAVCWL. Over 248-297 the chain is Lumenal; it reads PFCTDVEQIMQVLRRLFPIDRGLFEDKVANIWCSLSVLIKIKNVVSPQTQ. The helical transmembrane segment at 298 to 318 threads the bilayer; that stretch reads LKLSFAVTFLSLLPTCIKLTV. Over 319–338 the chain is Cytoplasmic; it reads QPSLRGFKLTLVSCALSFFL. A helical membrane pass occupies residues 339 to 359; sequence FSFQVHEKSILLVSVPVCLII. Residues 360 to 361 lie on the Lumenal side of the membrane; that stretch reads NE. Residues 362–382 form a helical membrane-spanning segment; the sequence is VPFMATWFLLVSTFSMLPLLL. Over 383–387 the chain is Cytoplasmic; the sequence is KDGLL. A helical membrane pass occupies residues 388 to 408; sequence LPYAVTTLAFLSACVASFAIF. The Lumenal portion of the chain corresponds to 409-441; sequence EKTSAKDLQLKPFSQSLRGYVSWFKLFPKIVRS. A helical membrane pass occupies residues 442-462; it reads LFLLSVTLMGVLSVMSAAVHP. The Cytoplasmic portion of the chain corresponds to 463 to 473; that stretch reads PQRFPDLFPVS. Residues 474 to 494 form a helical membrane-spanning segment; the sequence is VSSISCLHFLFFLVYFNVIIL. The Lumenal portion of the chain corresponds to 495-507; the sequence is WDSKNSRNQKKVS.

The protein belongs to the ALG6/ALG8 glucosyltransferase family.

Its subcellular location is the endoplasmic reticulum membrane. The enzyme catalyses an alpha-D-Man-(1-&gt;2)-alpha-D-Man-(1-&gt;2)-alpha-D-Man-(1-&gt;3)-[alpha-D-Man-(1-&gt;2)-alpha-D-Man-(1-&gt;3)-[alpha-D-Man-(1-&gt;2)-alpha-D-Man-(1-&gt;6)]-alpha-D-Man-(1-&gt;6)]-beta-D-Man-(1-&gt;4)-beta-D-GlcNAc-(1-&gt;4)-alpha-D-GlcNAc-diphospho-di-trans,poly-cis-dolichol + a di-trans,poly-cis-dolichyl beta-D-glucosyl phosphate = an alpha-D-Glc-(1-&gt;3)-alpha-D-Man-(1-&gt;2)-alpha-D-Man-(1-&gt;2)-alpha-D-Man-(1-&gt;3)-[alpha-D-Man-(1-&gt;2)-alpha-D-Man-(1-&gt;3)-[alpha-D-Man-(1-&gt;2)-alpha-D-Man-(1-&gt;6)]-alpha-D-Man-(1-&gt;6)]-beta-D-Man-(1-&gt;4)-beta-D-GlcNAc-(1-&gt;4)-alpha-D-GlcNAc-diphospho-di-trans,poly-cis-dolichol + a di-trans,poly-cis-dolichyl phosphate + H(+). It functions in the pathway protein modification; protein glycosylation. Its function is as follows. Dolichyl pyrophosphate Man9GlcNAc2 alpha-1,3-glucosyltransferase that operates in the biosynthetic pathway of dolichol-linked oligosaccharides, the glycan precursors employed in protein asparagine (N)-glycosylation. The assembly of dolichol-linked oligosaccharides begins on the cytosolic side of the endoplasmic reticulum membrane and finishes in its lumen. The sequential addition of sugars to dolichol pyrophosphate produces dolichol-linked oligosaccharides containing fourteen sugars, including two GlcNAcs, nine mannoses and three glucoses. Once assembled, the oligosaccharide is transferred from the lipid to nascent proteins by oligosaccharyltransferases. In the lumen of the endoplasmic reticulum, adds the first glucose residue from dolichyl phosphate glucose (Dol-P-Glc) onto the lipid-linked oligosaccharide intermediate Man(9)GlcNAc(2)-PP-Dol to produce Glc(1)Man(9)GlcNAc(2)-PP-Dol. Glc(1)Man(9)GlcNAc(2)-PP-Dol is a substrate for ALG8, the following enzyme in the biosynthetic pathway. The sequence is that of Dolichyl pyrophosphate Man9GlcNAc2 alpha-1,3-glucosyltransferase from Gallus gallus (Chicken).